The sequence spans 315 residues: WD repeat domain-containing protein 83 (315 aa).

WD repeat units lie at residues 23–62 (CGQG…LLRT), 65–104 (GHGY…VVRK), 107–146 (GHAG…PEPV), 151–188 (EARD…VTSD), 190–228 (VGSP…LLGE), 231–272 (GHKN…LALA), and 275–313 (VGSN…AEGG).

Belongs to the WD repeat MORG1 family. Interacts with EGLN3/PHD3. Interacts with ERK signaling proteins MAP2K1/MEK1, MAP2K2/MEK2, LAMTOR3, ARAF/Raf-1, MAPK1/ERK2 and MAPK3/ERK1. Identified in the spliceosome C complex. Interacts with PARD6B and CRB3. Interacts strongly with GTP-bound RRAGA but not with inactive GDP-bound. Interacts with p62/SQSTM1. As to expression, highly expressed in testis and brain. Expressed at intermediate level in heart, liver and kidney. Weakly expressed in spleen and lung and absent in muscle.

The protein localises to the cytoplasm. It is found in the lysosome. The protein resides in the nucleus. Functionally, molecular scaffold protein for various multimeric protein complexes. Acts as a module in the assembly of a multicomponent scaffold for the ERK pathway, linking ERK responses to specific agonists. At low concentrations it enhances ERK activation, whereas high concentrations lead to the inhibition of ERK activation. Also involved in response to hypoxia by acting as a negative regulator of HIF1A/HIF-1-alpha via its interaction with EGLN3/PHD3. May promote degradation of HIF1A. May act by recruiting signaling complexes to a specific upstream activator. May also be involved in pre-mRNA splicing. Participates in tight junction development by regulating apico-basal polarity, a key step in tissue development and organization. Mechanistically, regulates the translocation of PAR6-aPKC from the cytoplasm to the apical surface by acting as an adapter between PARD6B AND CRB3. Also acts as a negative regulator of mTORC1 under nutrient-rich conditions by binding to the active Rag GTPases to inhibit mTORC1 localization to the lysosome and phosphorylation of downstream targets. This facilitates constitutive basal autophagy during nutrient availability. This is WD repeat domain-containing protein 83 (Wdr83) from Rattus norvegicus (Rat).